We begin with the raw amino-acid sequence, 388 residues long: DNA ADP-ribosyl transferase-DNA ADP-ribosyl glycohydrolase fusion protein (388 aa).

The 192-residue stretch at 6-197 folds into the DarT domain; that stretch reads RELYYITHID…PVIPDPTFFF (192 aa). Residues 10 to 12 and R50 each bind NAD(+); that span reads YIT. The interval 34-52 is NAD(+)-binding element; sequence QSINCKKVYDNSIVLKRKS. The Proton acceptor role is filled by R50. Residues 107–152 are ADP-ribosylating turn-turn loop; that stretch reads TDGNAASSETQIYRKSEIKNIKNIISVKDMEYWREEDGSKRKIMAE. E152 is an active-site residue. Residues 196-376 enclose the Macro domain; the sequence is FFLPNREIKL…IYLPLEKRIP (181 aa). Residues 215-216, 227-229, T301, 339-343, and 371-372 each bind ADP-D-ribose; these read DM, SVN, GCGLG, and LE.

The protein in the N-terminal section; belongs to the DarT ADP-ribosyltransferase family. It in the C-terminal section; belongs to the DarG ADP-ribosyl glycohydrolase family.

It carries out the reaction an N-(ADP-alpha-D-ribosyl)-thymidine in DNA + H2O = a thymidine in DNA + ADP-D-ribose. The catalysed reaction is a thymidine in DNA + NAD(+) = an N-(ADP-alpha-D-ribosyl)-thymidine in DNA + nicotinamide + H(+). A fusion protein of the toxic and antitoxin components of a hybrid type II/IV toxin-antitoxin (TA) system. The N-terminal domain ADP-ribosylates ssDNA on a thymidine residue, while the C-terminal domain removes the modification, neutralizing the toxic effect. This is DNA ADP-ribosyl transferase-DNA ADP-ribosyl glycohydrolase fusion protein from Thermosipho africanus (strain H17ap60334).